Here is a 497-residue protein sequence, read N- to C-terminus: Tryptophan decarboxylase 2 (497 aa).

Alanine 162, serine 163, threonine 257, and asparagine 311 together coordinate pyridoxal 5'-phosphate. Position 314 is an N6-(pyridoxal phosphate)lysine (lysine 314).

Belongs to the group II decarboxylase family. Pyridoxal 5'-phosphate is required as a cofactor.

It carries out the reaction L-tryptophan + H(+) = tryptamine + CO2. Involved in serotonin biosynthesis. Catalyzes the decarboxylation of L-tryptophan to tryptamine, which is converted to serotonin by tryptamine 5-hydroxylase. May play a minor role in serotonin biosynthetis during senescence. Accumulation of serotonin attenuates leaf senescence. The sequence is that of Tryptophan decarboxylase 2 from Oryza sativa subsp. japonica (Rice).